The chain runs to 399 residues: uncharacterized protein (399 aa).

Belongs to the NADH:flavin oxidoreductase/NADH oxidase family. As to quaternary structure, directly interacts with lipoylated GcvH-L (SpyM50867).

This is an uncharacterized protein from Streptococcus pyogenes serotype M5 (strain Manfredo).